Reading from the N-terminus, the 277-residue chain is Shikimate dehydrogenase (NADP(+)) (277 aa).

Shikimate contacts are provided by residues 18 to 20 (SKS) and T65. Residue K69 is the Proton acceptor of the active site. E81 serves as a coordination point for NADP(+). The shikimate site is built by N90 and D106. Residues 130–134 (GAGGA), 154–159 (NRTFSK), and M217 each bind NADP(+). Y219 serves as a coordination point for shikimate. G241 contributes to the NADP(+) binding site.

The protein belongs to the shikimate dehydrogenase family. As to quaternary structure, homodimer.

The enzyme catalyses shikimate + NADP(+) = 3-dehydroshikimate + NADPH + H(+). It participates in metabolic intermediate biosynthesis; chorismate biosynthesis; chorismate from D-erythrose 4-phosphate and phosphoenolpyruvate: step 4/7. Functionally, involved in the biosynthesis of the chorismate, which leads to the biosynthesis of aromatic amino acids. Catalyzes the reversible NADPH linked reduction of 3-dehydroshikimate (DHSA) to yield shikimate (SA). The chain is Shikimate dehydrogenase (NADP(+)) from Vibrio vulnificus (strain CMCP6).